Consider the following 240-residue polypeptide: UDP-2,3-diacylglucosamine hydrolase (240 aa).

5 residues coordinate Mn(2+): Asp-8, His-10, Asp-41, Asn-79, and His-114. 79-80 (NR) serves as a coordination point for substrate. 5 residues coordinate substrate: Asp-122, Ser-160, Asn-164, Lys-167, and His-195. 2 residues coordinate Mn(2+): His-195 and His-197.

Belongs to the LpxH family. The cofactor is Mn(2+).

Its subcellular location is the cell inner membrane. The enzyme catalyses UDP-2-N,3-O-bis[(3R)-3-hydroxytetradecanoyl]-alpha-D-glucosamine + H2O = 2-N,3-O-bis[(3R)-3-hydroxytetradecanoyl]-alpha-D-glucosaminyl 1-phosphate + UMP + 2 H(+). It functions in the pathway glycolipid biosynthesis; lipid IV(A) biosynthesis; lipid IV(A) from (3R)-3-hydroxytetradecanoyl-[acyl-carrier-protein] and UDP-N-acetyl-alpha-D-glucosamine: step 4/6. In terms of biological role, hydrolyzes the pyrophosphate bond of UDP-2,3-diacylglucosamine to yield 2,3-diacylglucosamine 1-phosphate (lipid X) and UMP by catalyzing the attack of water at the alpha-P atom. Involved in the biosynthesis of lipid A, a phosphorylated glycolipid that anchors the lipopolysaccharide to the outer membrane of the cell. This chain is UDP-2,3-diacylglucosamine hydrolase, found in Escherichia coli O157:H7.